A 630-amino-acid chain; its full sequence is tRNA uridine 5-carboxymethylaminomethyl modification enzyme MnmG (630 aa).

13-18 is a binding site for FAD; the sequence is GGGHAG. 273 to 287 contributes to the NAD(+) binding site; that stretch reads GPRYCPSIEDKVNRF.

It belongs to the MnmG family. As to quaternary structure, homodimer. Heterotetramer of two MnmE and two MnmG subunits. FAD serves as cofactor.

It localises to the cytoplasm. Its function is as follows. NAD-binding protein involved in the addition of a carboxymethylaminomethyl (cmnm) group at the wobble position (U34) of certain tRNAs, forming tRNA-cmnm(5)s(2)U34. This Teredinibacter turnerae (strain ATCC 39867 / T7901) protein is tRNA uridine 5-carboxymethylaminomethyl modification enzyme MnmG.